Reading from the N-terminus, the 420-residue chain is Glycogen synthase kinase-3 beta (420 aa).

Positions 1–22 (MSGRPRTTSFAESCKPVQQPSA) are enriched in polar residues. The segment at 1–35 (MSGRPRTTSFAESCKPVQQPSAFGSMKVSRDKDGS) is disordered. The residue at position 9 (serine 9) is a Phosphoserine; by PKB/AKT1, RPS6KA3 and SGK3. Cysteine 14 is lipidated: S-palmitoyl cysteine. Residues 56-340 (YTDTKVIGNG…PLEACAHSFF (285 aa)) form the Protein kinase domain. Residues 62 to 70 (IGNGSFGVV) and lysine 85 contribute to the ATP site. Aspartate 181 functions as the Proton acceptor in the catalytic mechanism. Tyrosine 216 carries the phosphotyrosine modification. Low complexity-rich tracts occupy residues 387-401 (AAST…SDAN) and 409-420 (NNAAFASASNST). Positions 387 to 420 (AASTPTNATAASDANAGDRGQTNNAAFASASNST) are disordered. At serine 389 the chain carries Phosphoserine. Position 390 is a phosphothreonine (threonine 390).

This sequence belongs to the protein kinase superfamily. CMGC Ser/Thr protein kinase family. GSK-3 subfamily. Monomer. Interacts with DAB2IP (via C2 domain); the interaction stimulates GSK3B kinase activation. Interacts (via C2 domain) with PPP2CA. Interacts with ARRB2, AXIN1, CABYR, DISC1, MMP2, MUC1, NIN, PRUNE1 and ZBED3. Interacts with AXIN1; the interaction mediates hyperphosphorylation of CTNNB1 leading to its ubiquitination and destruction. Interacts with and phosphorylates SNAI1. Interacts with DNM1L (via a C-terminal domain). Found in a complex composed of MACF1, APC, AXIN1, CTNNB1 and GSK3B. Interacts with SGK3. Interacts with the CLOCK-BMAL1 heterodimer. Interacts with the BMAL1. Interacts with CTNND2. The complex composed, at least, of APC, CTNNB1 and GSK3B interacts with JPT1; the interaction requires the inactive form of GSK3B (phosphorylated at 'Ser-9'). Forms a complex composed of PRKAR2A or PRKAR2B, GSK3B and GSKIP through GSKIP interaction; facilitates PKA-induced phosphorylation and regulates GSK3B activity. Interacts with GSKIP. Interacts with GID8. Interacts with PIWIL2. Interacts with LMBR1L. Interacts with DDX3X. Interacts with BIRC2. Interacts with TNFRSF10B; TNFRSF10B stimulation inhibits GSK3B kinase activity. Found in a complex with SLC39A6, SLC39A10 and with GSK3B that controls NCAM1 phosphorylation. Interacts with PKP3 (via ARM repeats); the interaction may be involved in PKP3 protein degradation. Phosphorylated by AKT1 and ILK1. Upon insulin-mediated signaling, the activated PKB/AKT1 and RPS6KA3 protein kinases phosphorylate and deactivate GSK3B, resulting in the dephosphorylation and activation of GYS1. Activated by phosphorylation at Tyr-216. Inactivated by phosphorylation at Ser-9. Post-translationally, mono-ADP-ribosylation by PARP10 negatively regulates kinase activity. In terms of processing, palmitoylated. Palmitoylation by ZDHHC4 prevents AKT1-mediated phosphorylation.

The protein resides in the cytoplasm. The protein localises to the nucleus. Its subcellular location is the cell membrane. The enzyme catalyses L-seryl-[tau protein] + ATP = O-phospho-L-seryl-[tau protein] + ADP + H(+). The catalysed reaction is L-threonyl-[tau protein] + ATP = O-phospho-L-threonyl-[tau protein] + ADP + H(+). It carries out the reaction L-seryl-[protein] + ATP = O-phospho-L-seryl-[protein] + ADP + H(+). It catalyses the reaction L-threonyl-[protein] + ATP = O-phospho-L-threonyl-[protein] + ADP + H(+). With respect to regulation, activated by phosphorylation at Tyr-216. In response to insulin, inhibited by phosphorylation at Ser-9 by PKB/AKT1; phosphorylation at this site causes a conformational change, preventing access of substrates to the active site. Inhibited by IL22 treatment which also triggers phosphorylation at Ser-9, promoting inactivation. Inhibited by lithium. Its function is as follows. Constitutively active protein kinase that acts as a negative regulator in the hormonal control of glucose homeostasis, Wnt signaling and regulation of transcription factors and microtubules, by phosphorylating and inactivating glycogen synthase (GYS1 or GYS2), EIF2B, CTNNB1/beta-catenin, APC, AXIN1, DPYSL2/CRMP2, JUN, NFATC1/NFATC, MAPT/TAU and MACF1. Requires primed phosphorylation of the majority of its substrates. In skeletal muscle, contributes to insulin regulation of glycogen synthesis by phosphorylating and inhibiting GYS1 activity and hence glycogen synthesis. May also mediate the development of insulin resistance by regulating activation of transcription factors. Regulates protein synthesis by controlling the activity of initiation factor 2B (EIF2BE/EIF2B5) in the same manner as glycogen synthase. In Wnt signaling, GSK3B forms a multimeric complex with APC, AXIN1 and CTNNB1/beta-catenin and phosphorylates the N-terminus of CTNNB1 leading to its degradation mediated by ubiquitin/proteasomes. Phosphorylates JUN at sites proximal to its DNA-binding domain, thereby reducing its affinity for DNA. Phosphorylates NFATC1/NFATC on conserved serine residues promoting NFATC1/NFATC nuclear export, shutting off NFATC1/NFATC gene regulation, and thereby opposing the action of calcineurin. Phosphorylates MAPT/TAU on 'Thr-548', decreasing significantly MAPT/TAU ability to bind and stabilize microtubules. MAPT/TAU is the principal component of neurofibrillary tangles in Alzheimer disease. Plays an important role in ERBB2-dependent stabilization of microtubules at the cell cortex. Phosphorylates MACF1, inhibiting its binding to microtubules which is critical for its role in bulge stem cell migration and skin wound repair. Probably regulates NF-kappa-B (NFKB1) at the transcriptional level and is required for the NF-kappa-B-mediated anti-apoptotic response to TNF-alpha (TNF/TNFA). Negatively regulates replication in pancreatic beta-cells, resulting in apoptosis, loss of beta-cells and diabetes. Through phosphorylation of the anti-apoptotic protein MCL1, may control cell apoptosis in response to growth factors deprivation. Phosphorylates MUC1 in breast cancer cells, decreasing the interaction of MUC1 with CTNNB1/beta-catenin. Is necessary for the establishment of neuronal polarity and axon outgrowth. Phosphorylates MARK2, leading to inhibition of its activity. Phosphorylates SIK1 at 'Thr-182', leading to sustainment of its activity. Phosphorylates ZC3HAV1 which enhances its antiviral activity. Phosphorylates SNAI1, leading to its ubiquitination and proteasomal degradation. Phosphorylates SFPQ at 'Thr-687' upon T-cell activation. Phosphorylates NR1D1 st 'Ser-55' and 'Ser-59' and stabilizes it by protecting it from proteasomal degradation. Regulates the circadian clock via phosphorylation of the major clock components including BMAL1, CLOCK and PER2. Phosphorylates CLOCK AT 'Ser-427' and targets it for proteasomal degradation. Phosphorylates BMAL1 at 'Ser-17' and 'Ser-21' and primes it for ubiquitination and proteasomal degradation. Phosphorylates FBXL2 at 'Thr-404' and primes it for ubiquitination by the SCF(FBXO3) complex and proteasomal degradation. Phosphorylates OGT at 'Ser-3' or 'Ser-4' which positively regulates its activity. Phosphorylates MYCN in neuroblastoma cells which may promote its degradation. Regulates the circadian rhythmicity of hippocampal long-term potentiation and BMAL1 and PER2 expression. Acts as a regulator of autophagy by mediating phosphorylation of KAT5/TIP60 under starvation conditions, activating KAT5/TIP60 acetyltransferase activity and promoting acetylation of key autophagy regulators, such as ULK1 and RUBCNL/Pacer. Negatively regulates extrinsic apoptotic signaling pathway via death domain receptors. Promotes the formation of an anti-apoptotic complex, made of DDX3X, BRIC2 and GSK3B, at death receptors, including TNFRSF10B. The anti-apoptotic function is most effective with weak apoptotic signals and can be overcome by stronger stimulation. Phosphorylates E2F1, promoting the interaction between E2F1 and USP11, stabilizing E2F1 and promoting its activity. Phosphorylates mTORC2 complex component RICTOR at 'Ser-1235' in response to endoplasmic stress, inhibiting mTORC2. Phosphorylates FXR1, promoting FXR1 ubiquitination by the SCF(FBXO4) complex and FXR1 degradation by the proteasome. Phosphorylates interleukin-22 receptor subunit IL22RA1, preventing its proteasomal degradation. This Spermophilus citellus (European ground squirrel) protein is Glycogen synthase kinase-3 beta.